The sequence spans 259 residues: UPF0246 protein NMB0895 (259 aa).

The protein belongs to the UPF0246 family.

This chain is UPF0246 protein NMB0895, found in Neisseria meningitidis serogroup B (strain ATCC BAA-335 / MC58).